The sequence spans 781 residues: Mitochondrial inner membrane m-AAA protease component paraplegin (781 aa).

The transit peptide at 1 to 43 (MAAALLLLRALRQSPEPGPWRLWAQLSGRSPGLFSGAGGRRPY) directs the protein to the mitochondrion. The propeptide at 44–105 (VVRGTPIGLA…GSTLYFNTSG (62 aa)) is removed in mature form. A disordered region spans residues 105-134 (GLKQKNKDDDKPKGKAPEDDEEERRRKERE). Residues 106 to 144 (LKQKNKDDDKPKGKAPEDDEEERRRKEREDQMYRERLRT) lie on the Mitochondrial matrix side of the membrane. The segment covering 109–134 (KNKDDDKPKGKAPEDDEEERRRKERE) has biased composition (basic and acidic residues). A helical membrane pass occupies residues 145 to 165 (LFIIAIVMSLLNSLSTSGGSI). At 166–248 (SWADFVNEML…DRIPVSYKRT (83 aa)) the chain is on the mitochondrial intermembrane side. The helical transmembrane segment at 249-269 (GFFGNALYALGMTAVGLAILW) threads the bilayer. The Mitochondrial matrix segment spans residues 270-781 (YVFRLAGMTG…ASGEEEAPAP (512 aa)). Residues alanine 312, glycine 352, cysteine 353, glycine 354, lysine 355, threonine 356, and leucine 357 each contribute to the ATP site. Tyrosine 505 carries the post-translational modification 3'-nitrotyrosine. Residue histidine 574 participates in Zn(2+) binding. Residue glutamate 575 is part of the active site. Zn(2+) contacts are provided by histidine 578 and aspartate 650. Positions 701-781 (HEARLLVARA…ASGEEEAPAP (81 aa)) are interaction with PPIF.

The protein in the N-terminal section; belongs to the AAA ATPase family. It in the C-terminal section; belongs to the peptidase M41 family. As to quaternary structure, forms heterooligomers with AFG3L2; the m-AAA protease is composed of heterohexamers of AFG3L2 and SPG7. Component of the mitochondrial permeability transition pore complex (mPTPC), at least composed of SPG7, VDAC1 and PPIF. Interacts with MAIP1. It depends on Zn(2+) as a cofactor. Post-translationally, upon import into the mitochondrion, the N-terminal transit peptide is cleaved by the mitochondrial-processing peptidase (MPP) to generate an intermediate form which undergoes a second proteolytic cleavage mediated by proteases AFG3L2 removing an additional N-terminal fragment to generate the proteolytically active mature form.

Its subcellular location is the mitochondrion inner membrane. The enzyme catalyses ATP + H2O = ADP + phosphate + H(+). Its function is as follows. Catalytic component of the m-AAA protease, a protease that plays a key role in proteostasis of inner mitochondrial membrane proteins, and which is essential for axonal and neuron development. SPG7 possesses both ATPase and protease activities: the ATPase activity is required to unfold substrates, threading them into the internal proteolytic cavity for hydrolysis into small peptide fragments. The m-AAA protease exerts a dual role in the mitochondrial inner membrane: it mediates the processing of specific regulatory proteins and ensures protein quality control by degrading misfolded polypeptides. Mediates protein maturation of the mitochondrial ribosomal subunit MRPL32/bL32m by catalyzing the cleavage of the presequence of MRPL32/bL32m prior to assembly into the mitochondrial ribosome. Acts as a regulator of calcium in neurons by mediating degradation of SMDT1/EMRE before its assembly with the uniporter complex, limiting the availability of SMDT1/EMRE for MCU assembly and promoting efficient assembly of gatekeeper subunits with MCU. Also regulates mitochondrial calcium by catalyzing degradation of MCU. Plays a role in the formation and regulation of the mitochondrial permeability transition pore (mPTP) and its proteolytic activity is dispensable for this function. This Rattus norvegicus (Rat) protein is Mitochondrial inner membrane m-AAA protease component paraplegin (Spg7).